Here is a 251-residue protein sequence, read N- to C-terminus: Prolactin-7B1 (251 aa).

The first 29 residues, 1 to 29, serve as a signal peptide directing secretion; the sequence is MHLSLTQQCLWPLQILLVSNLLLWENVAA. The N-linked (GlcNAc...) asparagine glycan is linked to Asn-73. 2 cysteine pairs are disulfide-bonded: Cys-100/Cys-216 and Cys-233/Cys-241.

It belongs to the somatotropin/prolactin family.

The protein localises to the secreted. The polypeptide is Prolactin-7B1 (Prl7b1) (Rattus norvegicus (Rat)).